The primary structure comprises 1650 residues: Phosphatidylinositol 3,4,5-trisphosphate-dependent Rac exchanger 1 protein (1650 aa).

Positions 1–19 (MEAPGSGGGDGGGDPGGDG) are enriched in gly residues. The disordered stretch occupies residues 1–33 (MEAPGSGGGDGGGDPGGDGAHPDARGPVSGPCA). Positions 44 to 235 (LRLCVLNEIL…KTVCSNINET (192 aa)) constitute a DH domain. Residues 266–387 (ELLLQGNLLK…WLDALIRERE (122 aa)) form the PH domain. Residue S314 is modified to Phosphoserine. DEP domains lie at 416–491 (MSKK…RFRY) and 518–592 (SLYA…RFHA). Positions 620 to 698 (RLLIPPQEDD…SRRPLRLLVA (79 aa)) constitute a PDZ domain. The tract at residues 793-813 (ARASQGAPDEDPQEDDQPDSA) is disordered. Acidic residues predominate over residues 800–810 (PDEDPQEDDQP). S991 carries the phosphoserine modification. 2 disordered regions span residues 1022-1047 (SPAVDEDSQGQGLNDSSYGSASGAPS) and 1099-1129 (PTSAAPAPCDPSLVEETSSSPPVSEESEVDR). Polar residues predominate over residues 1030–1047 (QGQGLNDSSYGSASGAPS). A compositionally biased stretch (low complexity) spans 1109–1122 (PSLVEETSSSPPVS). Phosphoserine is present on residues S1186 and S1191.

Interacts preferentially with RAC2. Interacts with RAC1. Interacts with AUTS2.

It is found in the cytoplasm. It localises to the cytosol. The protein localises to the cell membrane. Its function is as follows. Functions as a RAC guanine nucleotide exchange factor (GEF), which activates the Rac proteins by exchanging bound GDP for free GTP. Its activity is synergistically activated by phosphatidylinositol 3,4,5-trisphosphate and the beta gamma subunits of heterotrimeric G protein. May function downstream of heterotrimeric G proteins in neutrophils. This Mus musculus (Mouse) protein is Phosphatidylinositol 3,4,5-trisphosphate-dependent Rac exchanger 1 protein (Prex1).